A 175-amino-acid polypeptide reads, in one-letter code: uncharacterized protein (175 aa).

This is an uncharacterized protein from Acanthamoeba polyphaga mimivirus (APMV).